A 286-amino-acid polypeptide reads, in one-letter code: Small ribosomal subunit protein uS15m (286 aa).

The N-terminal 33 residues, 1 to 33 (MSIVGRNAILNLRISLCPLFMGKRSFVSSPVSN), are a transit peptide targeting the mitochondrion.

The protein belongs to the universal ribosomal protein uS15 family. In terms of assembly, component of the mitochondrial small ribosomal subunit (mt-SSU). Mature yeast 74S mitochondrial ribosomes consist of a small (37S) and a large (54S) subunit. The 37S small subunit contains a 15S ribosomal RNA (15S mt-rRNA) and 34 different proteins. The 54S large subunit contains a 21S rRNA (21S mt-rRNA) and 46 different proteins. In terms of processing, the precursor is processed in two steps involving mitochondrial intermediate peptidase (MIP) and mitochondrial processing peptidase (MPP).

Its subcellular location is the mitochondrion. Functionally, component of the mitochondrial ribosome (mitoribosome), a dedicated translation machinery responsible for the synthesis of mitochondrial genome-encoded proteins, including at least some of the essential transmembrane subunits of the mitochondrial respiratory chain. The mitoribosomes are attached to the mitochondrial inner membrane and translation products are cotranslationally integrated into the membrane. The sequence is that of Small ribosomal subunit protein uS15m (MRPS28) from Saccharomyces cerevisiae (strain ATCC 204508 / S288c) (Baker's yeast).